Reading from the N-terminus, the 340-residue chain is GTPase Obg (340 aa).

The 161-residue stretch at 1–161 folds into the Obg domain; that stretch reads MKFVDMTNIT…QHLLLELLLI (161 aa). Positions 162 to 335 constitute an OBG-type G domain; it reads ANVGIFGLPN…LCNSIMKFIM (174 aa). Residues 168–175, 193–197, 215–218, 285–288, and 316–318 each bind GTP; these read GLPNSGKS, FTTLV, DIPG, NKID, and SSI. Mg(2+) contacts are provided by Ser175 and Thr195.

This sequence belongs to the TRAFAC class OBG-HflX-like GTPase superfamily. OBG GTPase family. Monomer. Mg(2+) is required as a cofactor.

It is found in the cytoplasm. An essential GTPase which binds GTP, GDP and possibly (p)ppGpp with moderate affinity, with high nucleotide exchange rates and a fairly low GTP hydrolysis rate. Plays a role in control of the cell cycle, stress response, ribosome biogenesis and in those bacteria that undergo differentiation, in morphogenesis control. The chain is GTPase Obg from Blochmanniella pennsylvanica (strain BPEN).